The following is a 180-amino-acid chain: DNA-directed RNA polymerase subunit Rpo7 (180 aa).

Positions 82–165 (QEVVEGEVLQ…RLPRIALTMR (84 aa)) constitute an S1 motif domain.

The protein belongs to the eukaryotic RPB7/RPC8 RNA polymerase subunit family. In terms of assembly, part of the 13-subunit RNA polymerase complex. Forms a stalk with Rpo4 that extends from the main structure.

It is found in the cytoplasm. It carries out the reaction RNA(n) + a ribonucleoside 5'-triphosphate = RNA(n+1) + diphosphate. DNA-dependent RNA polymerase (RNAP) catalyzes the transcription of DNA into RNA using the four ribonucleoside triphosphates as substrates. The highly mobile Rpo4/Rpo7 heterodimer is conditionally required for transcription initiation. This is DNA-directed RNA polymerase subunit Rpo7 from Saccharolobus shibatae (strain ATCC 51178 / DSM 5389 / JCM 8931 / NBRC 15437 / B12) (Sulfolobus shibatae).